A 466-amino-acid chain; its full sequence is Glutamate--tRNA ligase (466 aa).

A 'HIGH' region motif is present at residues 10–20; it reads PSPTGYLHVGG. Zn(2+) is bound by residues cysteine 99, cysteine 101, cysteine 126, and aspartate 128. Positions 237–241 match the 'KMSKS' region motif; that stretch reads RLSKR. An ATP-binding site is contributed by lysine 240.

This sequence belongs to the class-I aminoacyl-tRNA synthetase family. Glutamate--tRNA ligase type 1 subfamily. As to quaternary structure, monomer. Requires Zn(2+) as cofactor.

It localises to the cytoplasm. It catalyses the reaction tRNA(Glu) + L-glutamate + ATP = L-glutamyl-tRNA(Glu) + AMP + diphosphate. In terms of biological role, catalyzes the attachment of glutamate to tRNA(Glu) in a two-step reaction: glutamate is first activated by ATP to form Glu-AMP and then transferred to the acceptor end of tRNA(Glu). This chain is Glutamate--tRNA ligase, found in Geobacter sulfurreducens (strain ATCC 51573 / DSM 12127 / PCA).